A 331-amino-acid polypeptide reads, in one-letter code: Pectate lyase B (331 aa).

Residues 1–25 (MKFTGSPLLWPSWLPLPAPPPPLPS) form the signal peptide. N99 carries an N-linked (GlcNAc...) asparagine glycan. Ca(2+) contacts are provided by D139, D169, and D173. Residue R226 is part of the active site.

The protein belongs to the polysaccharide lyase 1 family. It depends on Ca(2+) as a cofactor.

The protein localises to the secreted. The catalysed reaction is Eliminative cleavage of (1-&gt;4)-alpha-D-galacturonan to give oligosaccharides with 4-deoxy-alpha-D-galact-4-enuronosyl groups at their non-reducing ends.. It functions in the pathway glycan metabolism; pectin degradation; 2-dehydro-3-deoxy-D-gluconate from pectin: step 2/5. Functionally, acts as a virulence factor active in plant tissue maceration. This chain is Pectate lyase B (PLB), found in Colletotrichum gloeosporioides (Anthracnose fungus).